A 453-amino-acid chain; its full sequence is Chromosomal replication initiator protein DnaA (453 aa).

The segment at 1–79 (MKSLIQEKWN…KTAIAEVINQ (79 aa)) is domain I, interacts with DnaA modulators. The interval 79–111 (QDFEIEFVLLSQTKAEEKVQTQAPNKIKNESLS) is domain II. The segment at 112-330 (YLNPRYTFDT…GALTKIVALS (219 aa)) is domain III, AAA+ region. 4 residues coordinate ATP: Gly156, Gly158, Lys159, and Thr160. The interval 331–453 (RLKKKEVDVI…VLIKKINPTP (123 aa)) is domain IV, binds dsDNA.

This sequence belongs to the DnaA family. Oligomerizes as a right-handed, spiral filament on DNA at oriC.

It localises to the cytoplasm. Its function is as follows. Plays an essential role in the initiation and regulation of chromosomal replication. ATP-DnaA binds to the origin of replication (oriC) to initiate formation of the DNA replication initiation complex once per cell cycle. Binds the DnaA box (a 9 base pair repeat at the origin) and separates the double-stranded (ds)DNA. Forms a right-handed helical filament on oriC DNA; dsDNA binds to the exterior of the filament while single-stranded (ss)DNA is stabiized in the filament's interior. The ATP-DnaA-oriC complex binds and stabilizes one strand of the AT-rich DNA unwinding element (DUE), permitting loading of DNA polymerase. After initiation quickly degrades to an ADP-DnaA complex that is not apt for DNA replication. Binds acidic phospholipids. This chain is Chromosomal replication initiator protein DnaA, found in Lachnoclostridium phytofermentans (strain ATCC 700394 / DSM 18823 / ISDg) (Clostridium phytofermentans).